The sequence spans 117 residues: UPF0251 protein cbdbA217 (117 aa).

It belongs to the UPF0251 family.

This Dehalococcoides mccartyi (strain CBDB1) protein is UPF0251 protein cbdbA217.